A 916-amino-acid polypeptide reads, in one-letter code: Protein translocase subunit SecA (916 aa).

ATP is bound by residues Gln87, Gly105–Thr109, and Asp507. Residues Cys900, Cys902, Cys911, and His912 each coordinate Zn(2+).

This sequence belongs to the SecA family. Monomer and homodimer. Part of the essential Sec protein translocation apparatus which comprises SecA, SecYEG and auxiliary proteins SecDF-YajC and YidC. The cofactor is Zn(2+).

It is found in the cell inner membrane. Its subcellular location is the cytoplasm. The catalysed reaction is ATP + H2O + cellular proteinSide 1 = ADP + phosphate + cellular proteinSide 2.. Part of the Sec protein translocase complex. Interacts with the SecYEG preprotein conducting channel. Has a central role in coupling the hydrolysis of ATP to the transfer of proteins into and across the cell membrane, serving both as a receptor for the preprotein-SecB complex and as an ATP-driven molecular motor driving the stepwise translocation of polypeptide chains across the membrane. The chain is Protein translocase subunit SecA from Neisseria meningitidis serogroup B (strain ATCC BAA-335 / MC58).